Consider the following 552-residue polypeptide: MSGQTETLSSTSNIPIAKAEPEQSADFSASHKKRGPVSDRSSRRTSSEEVDLMPNVDDEVDGDVKPKKIGRKNSDQEPSSKRKAQNRAAQRAFRKRKEDHLKALETQVVTLKELHSSTTLENDQLRQKVRQLEEELRILKDGSFTFEMSLPHRNPSLSSLPTTGFSSNFAHMKDGISPQSNLHLSPNSIEKPNMHQNVLHNDRSADNLNHRYQVPPTLVDSNSAQGTLSPETPSSSDSPSNLYLNYPKRKSITHLHHDCSALSNGENGEDVADGKQFCQKLSTACGSIACSMLTKTTPHRASVDILSNLHESTVSPPMADESVQRSSEVSKSIPNVELSLNVNQQFVSPFGGTDSFPLPTDTGLDSLFEPDSAIENSHLKNVVMEPELFQAWREPAESLDKEFFNDEGEIDDVFHNYFHNSNENGDLITNSLHGLDFLENANESFPEQMYPFIKHNKDYISNHPDEVPPDGLPQKGKHDTSSQMPSENEIVPAKERAYLSCPKVWSKIINHPRFESFDIDDLCSKLKNKAKCSSSGVLLDERDVEAALNQFN.

The segment covering 1–14 has biased composition (polar residues); sequence MSGQTETLSSTSNI. The segment at 1–99 is disordered; that stretch reads MSGQTETLSS…QRAFRKRKED (99 aa). Positions 36–47 are enriched in basic and acidic residues; that stretch reads PVSDRSSRRTSS. The segment covering 48–61 has biased composition (acidic residues); it reads EEVDLMPNVDDEVD. The segment covering 62–80 has biased composition (basic and acidic residues); it reads GDVKPKKIGRKNSDQEPSS. In terms of domain architecture, bZIP spans 76 to 139; sequence QEPSSKRKAQ…RQLEEELRIL (64 aa). A Nuclear localization signal motif is present at residues 81–88; that stretch reads KRKAQNRA. Residues 81-102 form a basic motif region; sequence KRKAQNRAAQRAFRKRKEDHLK. Positions 104–111 are leucine-zipper; the sequence is LETQVVTL. Residues 213-244 are disordered; sequence QVPPTLVDSNSAQGTLSPETPSSSDSPSNLYL. Residues 219–228 show a composition bias toward polar residues; that stretch reads VDSNSAQGTL. Residues 229–240 show a composition bias toward low complexity; sequence SPETPSSSDSPS. The n-CRD stretch occupies residues 259-290; the sequence is CSALSNGENGEDVADGKQFCQKLSTACGSIAC. 2 cysteine pairs are disulfide-bonded: cysteine 278–cysteine 501 and cysteine 285–cysteine 532. The segment at 460 to 489 is disordered; it reads ISNHPDEVPPDGLPQKGKHDTSSQMPSENE. The c-CRD stretch occupies residues 501 to 532; it reads CPKVWSKIINHPRFESFDIDDLCSKLKNKAKC. A Nuclear export signal motif is present at residues 515 to 533; the sequence is ESFDIDDLCSKLKNKAKCS.

Belongs to the bZIP family. YAP subfamily. Homodimer. The reduced form of pap1 interacts in the nucleus with the nuclear export protein crm1, and in the cytoplasm with the peroxiredoxin tpx1. In terms of processing, depending on the oxidative stress inducing agent, pap1 can undergo two distinct conformational changes, both masking the nuclear export signal, thus abolishing nuclear export by crm1/exportin 1. The glutathione-depleting agent diethylmaleate (DEM) leads to the non-reversible modification of at least 2 cysteine residues in the c-CRD. Peroxide stress induces the formation of a tpx1-dependent interdomain disulfide bond between Cys-278 and Cys-501.

It localises to the nucleus. The protein localises to the cytoplasm. Its function is as follows. Transcription activator involved in multidrug resistance, oxidative stress response, and redox homeostasis. Regulates the transcription of genes encoding antioxidant enzymes like catalase ctt1 and components of the cellular thiol-reducing pathways, including the thioredoxin system (trx2, trr1), ABC transporters involved in multidrug resistance like bfr1/hba2 and pmd1 as well as the gene obr1/apt1. Preferentially binds to promoters with the core binding site 5'-TTA[CG]TAA-3'. Activity of the transcription factor is controlled through oxidation of specific cysteine residues resulting in the alteration of its subcellular location. Oxidative stress induces nuclear accumulation and as a result pap1 transcriptional activity. Required for sty1/spc1-conferred staurosporine resistance. In Schizosaccharomyces pombe (strain 972 / ATCC 24843) (Fission yeast), this protein is AP-1-like transcription factor (pap1).